Consider the following 333-residue polypeptide: 5-formaminoimidazole-4-carboxamide-1-(beta)-D-ribofuranosyl 5'-monophosphate synthetase (333 aa).

5-amino-1-(5-phospho-beta-D-ribosyl)imidazole-4-carboxamide contacts are provided by histidine 10 and serine 74. The 230-residue stretch at 95-324 (RNLFAWESNQ…ISREIRLALN (230 aa)) folds into the ATP-grasp domain. ATP contacts are provided by residues 125–185 (VEDV…VPMY) and glutamate 207. Asparagine 230 contacts 5-amino-1-(5-phospho-beta-D-ribosyl)imidazole-4-carboxamide. Glutamate 269 and glutamate 282 together coordinate Mg(2+).

The protein belongs to the phosphohexose mutase family. It depends on Mg(2+) as a cofactor. The cofactor is Mn(2+).

It catalyses the reaction 5-amino-1-(5-phospho-beta-D-ribosyl)imidazole-4-carboxamide + formate + ATP = 5-formamido-1-(5-phospho-D-ribosyl)imidazole-4-carboxamide + ADP + phosphate. It participates in purine metabolism; IMP biosynthesis via de novo pathway; 5-formamido-1-(5-phospho-D-ribosyl)imidazole-4-carboxamide from 5-amino-1-(5-phospho-D-ribosyl)imidazole-4-carboxamide (formate route): step 1/1. In terms of biological role, catalyzes the ATP- and formate-dependent formylation of 5-aminoimidazole-4-carboxamide-1-beta-d-ribofuranosyl 5'-monophosphate (AICAR) to 5-formaminoimidazole-4-carboxamide-1-beta-d-ribofuranosyl 5'-monophosphate (FAICAR) in the absence of folates. The polypeptide is 5-formaminoimidazole-4-carboxamide-1-(beta)-D-ribofuranosyl 5'-monophosphate synthetase (Sulfolobus acidocaldarius (strain ATCC 33909 / DSM 639 / JCM 8929 / NBRC 15157 / NCIMB 11770)).